The sequence spans 229 residues: Large ribosomal subunit protein uL1 (229 aa).

It belongs to the universal ribosomal protein uL1 family. In terms of assembly, part of the 50S ribosomal subunit.

Its function is as follows. Binds directly to 23S rRNA. The L1 stalk is quite mobile in the ribosome, and is involved in E site tRNA release. Protein L1 is also a translational repressor protein, it controls the translation of the L11 operon by binding to its mRNA. This Listeria innocua serovar 6a (strain ATCC BAA-680 / CLIP 11262) protein is Large ribosomal subunit protein uL1.